The following is a 209-amino-acid chain: Translation initiation factor IF-3 (209 aa).

The protein belongs to the IF-3 family. Monomer.

The protein localises to the cytoplasm. Functionally, IF-3 binds to the 30S ribosomal subunit and shifts the equilibrium between 70S ribosomes and their 50S and 30S subunits in favor of the free subunits, thus enhancing the availability of 30S subunits on which protein synthesis initiation begins. The sequence is that of Translation initiation factor IF-3 from Chlorobium phaeovibrioides (strain DSM 265 / 1930) (Prosthecochloris vibrioformis (strain DSM 265)).